Consider the following 382-residue polypeptide: D-alanine--D-alanine ligase (382 aa).

The region spanning 161–372 (KVVFEAAGLQ…YAELIDELIY (212 aa)) is the ATP-grasp domain. Residue 193-248 (VDRLGYPVFVKPARAGSSMGISKVDSLEGLDAAIAAAREHDLKLVIEAGIVGREIE) coordinates ATP. Mg(2+)-binding residues include D326, E339, and N341.

The protein belongs to the D-alanine--D-alanine ligase family. The cofactor is Mg(2+). It depends on Mn(2+) as a cofactor.

Its subcellular location is the cytoplasm. It catalyses the reaction 2 D-alanine + ATP = D-alanyl-D-alanine + ADP + phosphate + H(+). It functions in the pathway cell wall biogenesis; peptidoglycan biosynthesis. Cell wall formation. The protein is D-alanine--D-alanine ligase of Arthrobacter sp. (strain FB24).